Reading from the N-terminus, the 288-residue chain is METSLRRAAAPAGAVAERTVLRNGGAVRDAVAVEEPLEIRVDGDRLATTMRTPGADADLALGFLFAEGIIAGVEDVGTVIHCGRPGEEGYGNVMDVRSAAGMRIDPERILEGRRFVPVSAACGVCGRLSIDHLMERIHPLPAGEPVAPALVAAGMEILARSQPVFERTGGLHAAVLVGRDGAPIASAEDVGRHNAVDKVVGAALRAGRVGPRAAAGPAPALLAVSGRAGFEIVQKAAAAGVPVIASVSAPSSLAVDLARAAGVTLCGFVRGERMNVYANGERLGLTGP.

Cysteine 122 functions as the Cysteine persulfide intermediate in the catalytic mechanism. Residue 268 to 273 coordinates Mo-bis(molybdopterin guanine dinucleotide); it reads FVRGER.

Belongs to the FdhD family.

Its subcellular location is the cytoplasm. Its function is as follows. Required for formate dehydrogenase (FDH) activity. Acts as a sulfur carrier protein that transfers sulfur from IscS to the molybdenum cofactor prior to its insertion into FDH. This Anaeromyxobacter dehalogenans (strain 2CP-1 / ATCC BAA-258) protein is Sulfur carrier protein FdhD.